The following is a 226-amino-acid chain: Glutathione S-transferase kappa 1 (226 aa).

Glutathione contacts are provided by residues 15 to 17 (SPY), Asn53, and 199 to 200 (SD).

This sequence belongs to the GST superfamily. Kappa family.

The enzyme catalyses RX + glutathione = an S-substituted glutathione + a halide anion + H(+). The protein is Glutathione S-transferase kappa 1 (gstk-1) of Caenorhabditis elegans.